A 159-amino-acid chain; its full sequence is MEKLRRVLSGQDDEEQGLTAQVLDASSLSFNTRLKWFVICFVAGIFFSFLGTGLLWLPNGMKLFAVFYTLGNLAALASTCFLMGPVKQLKKMFETTRLLATIIMLLCLVFTLCAALWWRKKGLALLFCILQFLSMTWYSLSYIPYARDAVLKCCSSLLG.

Residues 1 to 36 are Cytoplasmic-facing; the sequence is MEKLRRVLSGQDDEEQGLTAQVLDASSLSFNTRLKW. The residue at position 9 (Ser-9) is a Phosphoserine. A helical membrane pass occupies residues 37-57; sequence FVICFVAGIFFSFLGTGLLWL. The Lumenal portion of the chain corresponds to 58–62; the sequence is PNGMK. The chain crosses the membrane as a helical span at residues 63 to 83; it reads LFAVFYTLGNLAALASTCFLM. Residues 84–97 are Cytoplasmic-facing; sequence GPVKQLKKMFETTR. A helical membrane pass occupies residues 98 to 118; that stretch reads LLATIIMLLCLVFTLCAALWW. At 119-122 the chain is on the lumenal side; the sequence is RKKG. Residues 123–143 traverse the membrane as a helical segment; it reads LALLFCILQFLSMTWYSLSYI. Residues 144–159 lie on the Cytoplasmic side of the membrane; it reads PYARDAVLKCCSSLLG.

Belongs to the SFT2 family.

The protein localises to the membrane. Its function is as follows. May be involved in fusion of retrograde transport vesicles derived from an endocytic compartment with the Golgi complex. The polypeptide is Vesicle transport protein SFT2A (Mus musculus (Mouse)).